Reading from the N-terminus, the 262-residue chain is Thiazole synthase (262 aa).

Lys97 acts as the Schiff-base intermediate with DXP in catalysis. 1-deoxy-D-xylulose 5-phosphate-binding positions include Gly158, 185-186 (AG), and 207-208 (NT). The segment at 243–262 (DKAQASTPTVGQPFWHSAEY) is disordered.

The protein belongs to the ThiG family. Homotetramer. Forms heterodimers with either ThiH or ThiS.

The protein localises to the cytoplasm. It catalyses the reaction [ThiS sulfur-carrier protein]-C-terminal-Gly-aminoethanethioate + 2-iminoacetate + 1-deoxy-D-xylulose 5-phosphate = [ThiS sulfur-carrier protein]-C-terminal Gly-Gly + 2-[(2R,5Z)-2-carboxy-4-methylthiazol-5(2H)-ylidene]ethyl phosphate + 2 H2O + H(+). It participates in cofactor biosynthesis; thiamine diphosphate biosynthesis. In terms of biological role, catalyzes the rearrangement of 1-deoxy-D-xylulose 5-phosphate (DXP) to produce the thiazole phosphate moiety of thiamine. Sulfur is provided by the thiocarboxylate moiety of the carrier protein ThiS. In vitro, sulfur can be provided by H(2)S. This Neisseria meningitidis serogroup A / serotype 4A (strain DSM 15465 / Z2491) protein is Thiazole synthase.